The sequence spans 262 residues: Acyl-[acyl-carrier-protein]--UDP-N-acetylglucosamine O-acyltransferase (262 aa).

Belongs to the transferase hexapeptide repeat family. LpxA subfamily. As to quaternary structure, homotrimer.

It localises to the cytoplasm. The catalysed reaction is a (3R)-hydroxyacyl-[ACP] + UDP-N-acetyl-alpha-D-glucosamine = a UDP-3-O-[(3R)-3-hydroxyacyl]-N-acetyl-alpha-D-glucosamine + holo-[ACP]. The protein operates within glycolipid biosynthesis; lipid IV(A) biosynthesis; lipid IV(A) from (3R)-3-hydroxytetradecanoyl-[acyl-carrier-protein] and UDP-N-acetyl-alpha-D-glucosamine: step 1/6. In terms of biological role, involved in the biosynthesis of lipid A, a phosphorylated glycolipid that anchors the lipopolysaccharide to the outer membrane of the cell. This Pectobacterium atrosepticum (strain SCRI 1043 / ATCC BAA-672) (Erwinia carotovora subsp. atroseptica) protein is Acyl-[acyl-carrier-protein]--UDP-N-acetylglucosamine O-acyltransferase.